A 227-amino-acid polypeptide reads, in one-letter code: Prolactin (227 aa).

Positions 1-28 (MNIKGSPWKGSLLLLLVSNLLLCQNVAP) are cleaved as a signal peptide. Cysteines 32 and 39 form a disulfide. Ser54 is modified (phosphoserine). Asn59 is a glycosylation site (N-linked (GlcNAc...) asparagine). A phosphoserine mark is found at Ser62 and Ser118. 2 disulfides stabilise this stretch: Cys86–Cys202 and Cys219–Cys227.

Belongs to the somatotropin/prolactin family. Interacts with PRLR.

It localises to the secreted. In terms of biological role, prolactin acts primarily on the mammary gland by promoting lactation. The polypeptide is Prolactin (PRL) (Macaca mulatta (Rhesus macaque)).